The primary structure comprises 296 residues: Protoheme IX farnesyltransferase (296 aa).

9 consecutive transmembrane segments (helical) span residues 14–34, 36–56, 75–95, 99–119, 133–153, 163–183, 209–229, 234–254, and 265–285; these read IIFG…KGVI, YPLF…GCVF, VLVK…ILGI, LLLY…GFVI, VYGT…GYCA, LILL…IAIF, ITLY…SGYA, LVVA…GYKA, and FVFS…DFNV.

The protein belongs to the UbiA prenyltransferase family. Protoheme IX farnesyltransferase subfamily.

It localises to the cell inner membrane. It carries out the reaction heme b + (2E,6E)-farnesyl diphosphate + H2O = Fe(II)-heme o + diphosphate. It participates in porphyrin-containing compound metabolism; heme O biosynthesis; heme O from protoheme: step 1/1. Converts heme B (protoheme IX) to heme O by substitution of the vinyl group on carbon 2 of heme B porphyrin ring with a hydroxyethyl farnesyl side group. The sequence is that of Protoheme IX farnesyltransferase from Yersinia enterocolitica serotype O:8 / biotype 1B (strain NCTC 13174 / 8081).